A 567-amino-acid chain; its full sequence is Inactive protein kinase SELMODRAFT_444075 (567 aa).

Positions 148–206 are disordered; it reads NETRRKGPSPSEVLNSTTSSPASHKPQVLNDFLRMKESREYTEETDTQRNVSRPVDRVS. The segment covering 159–169 has biased composition (polar residues); sequence EVLNSTTSSPA. A compositionally biased stretch (basic and acidic residues) spans 180–189; the sequence is LRMKESREYT. The segment covering 196 to 206 has biased composition (low complexity); the sequence is RNVSRPVDRVS. Residues 255 to 487 form the Protein kinase domain; it reads FSDVNFLAEG…EGDSLSDTSL (233 aa). Residues 261-269 and lysine 283 each bind ATP; that span reads LAEGGYGSV. Residues 511–538 are compositionally biased toward low complexity; the sequence is DSSSSRSSSASSVLKSFSRTQHSSRSSS. Positions 511-567 are disordered; it reads DSSSSRSSSASSVLKSFSRTQHSSRSSSNAGSPLNPAATQALAFKKYNKNTTRHTQD. Over residues 556–567 the composition is skewed to basic residues; it reads KYNKNTTRHTQD.

The protein is Inactive protein kinase SELMODRAFT_444075 of Selaginella moellendorffii (Spikemoss).